The primary structure comprises 80 residues: Small ribosomal subunit protein bS18 (80 aa).

This sequence belongs to the bacterial ribosomal protein bS18 family. As to quaternary structure, part of the 30S ribosomal subunit. Forms a tight heterodimer with protein bS6.

Functionally, binds as a heterodimer with protein bS6 to the central domain of the 16S rRNA, where it helps stabilize the platform of the 30S subunit. The protein is Small ribosomal subunit protein bS18 of Beijerinckia indica subsp. indica (strain ATCC 9039 / DSM 1715 / NCIMB 8712).